Reading from the N-terminus, the 208-residue chain is Large ribosomal subunit protein uL4 (208 aa).

Positions 45–77 (RQGTHKAKERAEIKGSTRKIKKQKGTGTARAGS) are disordered.

It belongs to the universal ribosomal protein uL4 family. In terms of assembly, part of the 50S ribosomal subunit.

Functionally, one of the primary rRNA binding proteins, this protein initially binds near the 5'-end of the 23S rRNA. It is important during the early stages of 50S assembly. It makes multiple contacts with different domains of the 23S rRNA in the assembled 50S subunit and ribosome. Its function is as follows. Forms part of the polypeptide exit tunnel. This chain is Large ribosomal subunit protein uL4, found in Christiangramia forsetii (strain DSM 17595 / CGMCC 1.15422 / KT0803) (Gramella forsetii).